A 691-amino-acid chain; its full sequence is F-box/LRR-repeat protein 5 (691 aa).

Positions 1-159 (MAPFPEEVDV…IKKKVIAQHC (159 aa)) are hemerythrin-like. Fe(3+) contacts are provided by His-15, His-57, Glu-58, Glu-61, His-80, His-126, and Glu-130. The region spanning 202–248 (STGITHLPPEVMVSIFSYLNPQELCRCSQVSTKWSQLAKTGSLWKHL) is the F-box domain. LRR repeat units lie at residues 340 to 364 (SSAVSSKMVRQILELCPNLEHLDLT), 365 to 392 (QTDISDSAFDSWSWLGCCQSLRHLDLSG), 393 to 418 (CEKITDVALEKISRALGILTTHESGL), 479 to 508 (VWMLDAEDLADIEDAVEWRHRNVESLCVME), 576 to 607 (TRLLREKDLIYSGSEKSDQETGRVLLFLSLSG), 608 to 635 (CYQITDHGLRVLTLGGGLPYLEHLNLSG), and 636 to 661 (CLTVTGAGLQDLVSACPSLNDEYFYY). Residues Cys-662, Cys-676, Cys-686, and Cys-687 each coordinate [2Fe-2S] cluster.

Part of a SCF (SKP1-cullin-F-box) protein ligase complex. Interacts with ACO1/IRP1, IREB2/IRP2; the interaction depends on the [2Fe-2S] cluster. Interacts with DCTN1/p150-glued. Requires [2Fe-2S] cluster as cofactor. Post-translationally, polybiquitinated upon iron and oxygen depletion, leading to its degradation by the proteasome. Ubiquitination is regulated by the hemerythrin-like region that acts as an oxygen and iron sensor. Undergoes constitutive ubiquitin-dependent degradation at the steady state by HERC2.

The protein localises to the cytoplasm. The protein resides in the perinuclear region. Its subcellular location is the nucleus. It participates in protein modification; protein ubiquitination. An iron-sulfur cluster promotes IRP2 polyubiquitination and degradation in response to both iron and oxygen concentrations. Component of some SCF (SKP1-cullin-F-box) protein ligase complex that plays a central role in iron homeostasis by promoting the ubiquitination and subsequent degradation of IREB2/IRP2. The C-terminal domain of FBXL5 contains a redox-sensitive [2Fe-2S] cluster that, upon oxidation, promotes binding to IRP2 to effect its oxygen-dependent degradation. Under iron deficiency conditions, the N-terminal hemerythrin-like (Hr) region, which contains a diiron metal center, cannot bind iron and undergoes conformational changes that destabilize the FBXL5 protein and cause its ubiquitination and degradation. When intracellular iron levels start rising, the Hr region is stabilized. Additional increases in iron levels facilitate the assembly and incorporation of a redox active [2Fe-2S] cluster in the C-terminal domain. Only when oxygen level is high enough to maintain the cluster in its oxidized state can FBXL5 recruit IRP2 as a substrate for polyubiquination and degradation. Promotes ubiquitination and subsequent degradation of the dynactin complex component DCTN1. Within the nucleus, promotes the ubiquitination of SNAI1; preventing its interaction with DNA and promoting its degradation. Negatively regulates DNA damage response by mediating the ubiquitin-proteasome degradation of the DNA repair protein NABP2. The polypeptide is F-box/LRR-repeat protein 5 (FBXL5) (Bos taurus (Bovine)).